Reading from the N-terminus, the 245-residue chain is tRNA1(Val) (adenine(37)-N6)-methyltransferase (245 aa).

Belongs to the methyltransferase superfamily. tRNA (adenine-N(6)-)-methyltransferase family.

It is found in the cytoplasm. It carries out the reaction adenosine(37) in tRNA1(Val) + S-adenosyl-L-methionine = N(6)-methyladenosine(37) in tRNA1(Val) + S-adenosyl-L-homocysteine + H(+). Functionally, specifically methylates the adenine in position 37 of tRNA(1)(Val) (anticodon cmo5UAC). The sequence is that of tRNA1(Val) (adenine(37)-N6)-methyltransferase from Escherichia coli (strain SE11).